Consider the following 562-residue polypeptide: Protein wntless (562 aa).

The Cytoplasmic segment spans residues 1-13 (MSGTILENLSGRK). The helical transmembrane segment at 14–34 (LSILVATLLLCQVLCFLLGGL) threads the bilayer. Over 35–239 (YAPLPAGHVT…AIHQNGGFTQ (205 aa)) the chain is Lumenal. N-linked (GlcNAc...) asparagine glycosylation occurs at Asn58. The chain crosses the membrane as a helical span at residues 240 to 260 (IWLLLKTMLFPFVVGIMIWFW). Residues 261 to 270 (RRVHLLQRSP) lie on the Cytoplasmic side of the membrane. The helical transmembrane segment at 271 to 291 (ALLEYMLIYLGAALTFLNLPL) threads the bilayer. Topologically, residues 292 to 311 (EYLSLVYEMPYMLLLSDIRQ) are lumenal. The helical transmembrane segment at 312-332 (GIFYAMLLTFWLVFAGEHMLI) threads the bilayer. Residues 333-344 (QDAPNKSTIRSR) are Cytoplasmic-facing. A helical transmembrane segment spans residues 345 to 365 (YWKHLSAVVVGCISLFVFDIC). At 366–390 (ERGVQLRNPFYSIWTTPLGAKVAMT) the chain is on the lumenal side. Residues 391 to 411 (FIVLAGVSAAIYFLFLCYMIW) traverse the membrane as a helical segment. Topologically, residues 412-441 (KVFRNIGDKRTSLPSMSQARRLHYEGLIYR) are cytoplasmic. A helical transmembrane segment spans residues 442 to 462 (FKFLMLATLVCAALTVAGFIM). Residues 463–482 (GQMAEGQWDWNDNVAIQPTS) are Lumenal-facing. A helical membrane pass occupies residues 483 to 503 (AFLTGVYGMWNIYIFALLILY). Residues 504 to 562 (APSHKQWPAMHHSDETTQSNENIVASAASEEIEFSHLPSDSNPSEISSLTSFTRKVAFD) are Cytoplasmic-facing.

It belongs to the wntless family. As to quaternary structure, interacts with wg; in the Golgi. Interacts with Vps35, a component of the retromer complex; wls stability is regulated by Vps35.

The protein resides in the presynaptic cell membrane. Its subcellular location is the postsynaptic cell membrane. It is found in the cell membrane. The protein localises to the endoplasmic reticulum membrane. It localises to the endosome membrane. The protein resides in the golgi apparatus membrane. In terms of biological role, a segment polarity gene required for wingless (wg)-dependent patterning processes, acting in both wg-sending cells and wg-target cells. In non-neuronal cells wls directs wg secretion. The wls traffic loop encompasses the Golgi, the cell surface, an endocytic compartment and a retrograde route leading back to the Golgi, and involves clathrin-mediated endocytosis and the retromer complex (a conserved protein complex consisting of Vps35 and Vps26). In neuronal cells (the larval motorneuron NMJ), the wg signal moves across the synapse via the release of wls-containing exosome-like vesicles. Postsynaptic wls is required for the trafficking of fz2 through the fz2-interacting protein Grip. This chain is Protein wntless, found in Drosophila sechellia (Fruit fly).